Here is a 225-residue protein sequence, read N- to C-terminus: Biosynthetic peptidoglycan transglycosylase (225 aa).

A helical transmembrane segment spans residues 7–27; it reads SFLFKMVLILLIAPIVLVGVV.

Belongs to the glycosyltransferase 51 family.

It is found in the cell inner membrane. The catalysed reaction is [GlcNAc-(1-&gt;4)-Mur2Ac(oyl-L-Ala-gamma-D-Glu-L-Lys-D-Ala-D-Ala)](n)-di-trans,octa-cis-undecaprenyl diphosphate + beta-D-GlcNAc-(1-&gt;4)-Mur2Ac(oyl-L-Ala-gamma-D-Glu-L-Lys-D-Ala-D-Ala)-di-trans,octa-cis-undecaprenyl diphosphate = [GlcNAc-(1-&gt;4)-Mur2Ac(oyl-L-Ala-gamma-D-Glu-L-Lys-D-Ala-D-Ala)](n+1)-di-trans,octa-cis-undecaprenyl diphosphate + di-trans,octa-cis-undecaprenyl diphosphate + H(+). It participates in cell wall biogenesis; peptidoglycan biosynthesis. In terms of biological role, peptidoglycan polymerase that catalyzes glycan chain elongation from lipid-linked precursors. The protein is Biosynthetic peptidoglycan transglycosylase of Vibrio parahaemolyticus serotype O3:K6 (strain RIMD 2210633).